A 528-amino-acid polypeptide reads, in one-letter code: Abrin-d (528 aa).

Q1 carries the post-translational modification Pyrrolidone carboxylic acid. The active site involves E164. An N-linked (GlcNAc...) asparagine glycan is attached at N200. 3 disulfides stabilise this stretch: C247-C269, C286-C305, and C329-C346. The Ricin B-type lectin 1 domain occupies 273-400 (YEPTVRIGGR…YLMRQGWRTG (128 aa)). Residues 283–325 (DGMCVDVYDDGYHNGNRIIAWKCKDRLEENQLWTLKSDLTIRS) form a 1-alpha repeat. The 1-beta repeat unit spans residues 326 to 366 (NGKCLTTEGYAPGNYVMIYDCTSAVAEATYWEIWDNGTIIN). Residues N361 and N401 are each glycosylated (N-linked (GlcNAc...) asparagine). The stretch at 369 to 401 (SALVLSAESSSMGGTLTVQTNEYLMRQGWRTGN) is one 1-gamma repeat. In terms of domain architecture, Ricin B-type lectin 2 spans 403-527 (TSPFVTSISG…GKPNQIWLTL (125 aa)). Residues 414–449 (SDLCMQAQGSNVWLADCDNNKKEQQWALYTDGSIRS) form a 2-alpha repeat. 2 disulfide bridges follow: C417-C430 and C456-C473. Residues 453–492 (TNNCLTSKDHKQGSPIVLMACSNGWASQRWLFKNDGSIYS) form a 2-beta repeat. One copy of the 2-gamma repeat lies at 495 to 528 (DDMVMDVKGSDPSLKQIILWPYTGKPNQIWLTLF).

This sequence in the N-terminal section; belongs to the ribosome-inactivating protein family. Type 2 RIP subfamily. In terms of assembly, disulfide-linked dimer of A and B chains.

It carries out the reaction Endohydrolysis of the N-glycosidic bond at one specific adenosine on the 28S rRNA.. The A chain is responsible for inhibiting protein synthesis through the catalytic inactivation of 60S ribosomal subunits by removing adenine from position 4,324 of 28S rRNA. Its function is as follows. The B chain is a galactose-specific lectin that facilitates the binding of abrin to the cell membrane that precedes endocytosis. The polypeptide is Abrin-d (Abrus precatorius (Indian licorice)).